Consider the following 585-residue polypeptide: MMQDATDPAVRAALQSQPSGLNSTDDWRQVMDRIMSLTARNPDAFRQQPQANRLSAILEAVVPARANPTHEKVLAIVNALAENRAIRPDEAGLVYDALLQRVARYNSGNVQTNLDRLVGDVREAVAQRERAQQQGNLGSMVALNAFLSTQPANVPRGQEDYTNFVSALRLMVTETPQSEVYQSGPDYFFQTSRQGLQTVNLSQAFKNLQGLWGVRAPTGDRATVSSLLTPNSRLLLLLIAPFTDSGSVSRDTYLGHLLTLYREAIGQAHVDEHTFQEITSVSRALGQEDTGSLEATLNYLLTNRRQKIPSLHSLNSEEERILRYVQQSVSLNLMRDGVTPSVALDMTARNMEPGMYASNRPFINRLMDYLHRAAAVNPEYFTNAILNPHWLPPPGFYTGGFEVPEGNDGFLWDDIDDSVFSPQPQTLLELQQREQAEAALRKESFRRPSSLSDLGAAAPRSDASSPFPSLIGSFTSTRTTRPRLLGEEEYLNNSLLQPQREKNLPPAFPNNGIESLVDKMSRWKTYAQEHRDVPGPRPPTRRQRHDRQRGLVWEDDDSADDSSVLDLGGSGNPFAHLRPRLGRMF.

The disordered stretch occupies residues 1 to 24 (MMQDATDPAVRAALQSQPSGLNST). The tract at residues 1–106 (MMQDATDPAV…ALLQRVARYN (106 aa)) is peripentonal hexon-tethering domain. Residues 14 to 24 (LQSQPSGLNST) show a composition bias toward polar residues. The binding to hexon-linking protein stretch occupies residues 138 to 251 (GSMVALNAFL…FTDSGSVSRD (114 aa)). A Phosphoserine; by host modification is found at Ser-225. Position 274 is a phosphothreonine; by host (Thr-274). Ser-310, Ser-444, Ser-449, Ser-450, Ser-452, Ser-469, and Ser-473 each carry phosphoserine; by host. Residues 438-475 (AALRKESFRRPSSLSDLGAAAPRSDASSPFPSLIGSFT) are disordered. The span at 462–475 (DASSPFPSLIGSFT) shows a compositional bias: polar residues. A Phosphotyrosine; by host modification is found at Tyr-490. A phosphoserine; by host mark is found at Ser-494 and Ser-515. The interval 528 to 573 (QEHRDVPGPRPPTRRQRHDRQRGLVWEDDDSADDSSVLDLGGSGNP) is disordered. Residues 571–585 (GNPFAHLRPRLGRMF) constitute a propeptide that is removed on maturation.

It belongs to the adenoviridae hexon-linking protein IIIa family. Interacts with hexon proteins; this interaction tethers the peripentonal hexons to hexons situated in the facet. Interacts with the penton protein (via N-terminus). Interacts with packaging protein 3; this interaction is required to promote correct genome packaging. Post-translationally, cleaved near the C-terminus by the viral protease during virion maturation to form the mature protein.

It is found in the virion. The protein localises to the host nucleus. In terms of biological role, structural component of the virion that acts as a cement protein on the capsid exterior which mediates the interactions between the hexons, including the peripentonal hexons, and reaches all the way to the penton vertices. Two hexon linking proteins IIIa, one from each facet, stabilize the unique edge interface between a pair of facets. As the virus enters the host cell, hexon linking proteins IIIa are shed concomitant with virion acidification in the endosome. During virus assembly, seems to play a role in the serotype specificity of the packaging of viral DNA via its interaction with packaging protein 3. The protein is Pre-hexon-linking protein IIIa of Human adenovirus C serotype 2 (HAdV-2).